The sequence spans 119 residues: Protein Wnt-4 (119 aa).

Residue S1 is the site of O-palmitoleoyl serine; by PORCN attachment. Intrachain disulfides connect C69/C100 and C85/C95. Residue N86 is glycosylated (N-linked (GlcNAc...) asparagine).

It belongs to the Wnt family. Palmitoleoylation is required for efficient binding to frizzled receptors. Depalmitoleoylation leads to Wnt signaling pathway inhibition.

Its subcellular location is the secreted. It localises to the extracellular space. It is found in the extracellular matrix. Functionally, ligand for members of the frizzled family of seven transmembrane receptors. Plays an important role in embryonic development. The protein is Protein Wnt-4 (WNT-4) of Eptatretus stoutii (Pacific hagfish).